Reading from the N-terminus, the 112-residue chain is Large ribosomal subunit protein P2-B (112 aa).

A disordered region spans residues Ala89–Asp112.

Belongs to the eukaryotic ribosomal protein P1/P2 family. P1 and P2 exist as dimers at the large ribosomal subunit. Post-translationally, phosphorylated.

Functionally, plays an important role in the elongation step of protein synthesis. This chain is Large ribosomal subunit protein P2-B, found in Trypanosoma cruzi.